A 449-amino-acid polypeptide reads, in one-letter code: Sulfite exporter TauE/SafE family protein 5 (449 aa).

The next 12 helical transmembrane spans lie at M1 to Q21, A57 to I77, G78 to A98, F101 to G121, Y127 to C147, V150 to K170, I224 to L244, P259 to T279, A315 to I335, T353 to M373, T378 to Q398, and I409 to G429.

It belongs to the 4-toluene sulfonate uptake permease (TSUP) (TC 2.A.102) family.

It is found in the membrane. The polypeptide is Sulfite exporter TauE/SafE family protein 5 (Arabidopsis thaliana (Mouse-ear cress)).